The sequence spans 361 residues: Caveolae-associated protein 4 (361 aa).

The interval 1–21 is disordered; the sequence is MEHNGSASNADKIHQNRLSNV. A coiled-coil region spans residues 100–124; sequence IKDVKARVEKQQTHVKKVEAKQEEI. Ser-152, Ser-171, and Ser-172 each carry phosphoserine. Residues 204 to 248 adopt a coiled-coil conformation; sequence ENMQKTRQNFDKKVNRIRTRIVTPERRERLRQSGERLRQSGERLK. Residues 230 to 255 are compositionally biased toward basic and acidic residues; that stretch reads RERLRQSGERLRQSGERLKQSGERFK. Disordered stretches follow at residues 230–283 and 310–346; these read RERL…AVAE and PEAL…FKPQ. Thr-335 carries the phosphothreonine modification. Ser-354 carries the post-translational modification Phosphoserine.

The protein belongs to the CAVIN family. In terms of assembly, component of the CAVIN complex composed of CAVIN1, CAVIN2, CAVIN3 and CAVIN4. Interacts with CAVIN1, ADRA1A, ADRA1B, MAPK1 and MAPK3. Interacts with CAVIN2; this augments the transactivation of NPPA.

It is found in the cytoplasm. The protein resides in the myofibril. It localises to the sarcomere. Its subcellular location is the cytosol. The protein localises to the cell membrane. It is found in the sarcolemma. The protein resides in the membrane. It localises to the caveola. Its function is as follows. Modulates the morphology of formed caveolae in cardiomyocytes, but is not required for caveolar formation. Facilitates the recruitment of MAPK1/3 to caveolae within cardiomyocytes and regulates alpha-1 adrenergic receptor-induced hypertrophic responses in cardiomyocytes through MAPK1/3 activation. Contributes to proper membrane localization and stabilization of caveolin-3 (CAV3) in cardiomyocytes. Induces RHOA activation and activates NPPA transcription and myofibrillar organization through the Rho/ROCK signaling pathway. This is Caveolae-associated protein 4 (CAVIN4) from Bos taurus (Bovine).